We begin with the raw amino-acid sequence, 199 residues long: Venom allergen 5 (199 aa).

Intrachain disulfides connect Cys-21–Cys-87 and Cys-167–Cys-184. Positions 38-186 (LKVHNDERQK…FYKCYLACNY (149 aa)) constitute an SCP domain. Residues 47–67 (KVKAGQETRGNPGPQPAASNM) form a disordered region.

This sequence belongs to the CRISP family. Venom allergen 5-like subfamily. Expressed by the venom gland.

Its subcellular location is the secreted. The chain is Venom allergen 5 from Brachyponera chinensis (Asian needle ant).